We begin with the raw amino-acid sequence, 464 residues long: ATP synthase subunit beta 1 (464 aa).

153–160 provides a ligand contact to ATP; the sequence is GGAGVGKT.

This sequence belongs to the ATPase alpha/beta chains family. F-type ATPases have 2 components, CF(1) - the catalytic core - and CF(0) - the membrane proton channel. CF(1) has five subunits: alpha(3), beta(3), gamma(1), delta(1), epsilon(1). CF(0) has three main subunits: a(1), b(2) and c(9-12). The alpha and beta chains form an alternating ring which encloses part of the gamma chain. CF(1) is attached to CF(0) by a central stalk formed by the gamma and epsilon chains, while a peripheral stalk is formed by the delta and b chains.

The protein localises to the cell inner membrane. It carries out the reaction ATP + H2O + 4 H(+)(in) = ADP + phosphate + 5 H(+)(out). In terms of biological role, produces ATP from ADP in the presence of a proton gradient across the membrane. The catalytic sites are hosted primarily by the beta subunits. The sequence is that of ATP synthase subunit beta 1 from Burkholderia mallei (strain SAVP1).